Reading from the N-terminus, the 237-residue chain is Phosphoribosylaminoimidazole-succinocarboxamide synthase (237 aa).

It belongs to the SAICAR synthetase family.

It carries out the reaction 5-amino-1-(5-phospho-D-ribosyl)imidazole-4-carboxylate + L-aspartate + ATP = (2S)-2-[5-amino-1-(5-phospho-beta-D-ribosyl)imidazole-4-carboxamido]succinate + ADP + phosphate + 2 H(+). The protein operates within purine metabolism; IMP biosynthesis via de novo pathway; 5-amino-1-(5-phospho-D-ribosyl)imidazole-4-carboxamide from 5-amino-1-(5-phospho-D-ribosyl)imidazole-4-carboxylate: step 1/2. This is Phosphoribosylaminoimidazole-succinocarboxamide synthase from Campylobacter fetus subsp. fetus (strain 82-40).